Here is a 134-residue protein sequence, read N- to C-terminus: Small ribosomal subunit protein bS6 (134 aa).

Positions 113 to 122 (NRDIKEKEQP) are enriched in basic and acidic residues. Residues 113-134 (NRDIKEKEQPSESNVDADLKVN) form a disordered region.

Belongs to the bacterial ribosomal protein bS6 family.

In terms of biological role, binds together with bS18 to 16S ribosomal RNA. The chain is Small ribosomal subunit protein bS6 from Borrelia duttonii (strain Ly).